A 1104-amino-acid chain; its full sequence is Lon protease homolog, mitochondrial (1104 aa).

The N-terminal 54 residues, 1–54, are a transit peptide targeting the mitochondrion; sequence MLRGQTLRWRAALQTPRSLILRPLFAPGGYNVGPRSVLETSRRFRSLPPSLRTF. Disordered stretches follow at residues 41-192 and 296-317; these read SRRF…KPSV and SLIP…TEKR. 2 stretches are compositionally biased toward basic and acidic residues: residues 64–104 and 125–144; these read KPPP…DSSG and KAAD…EAEA. The segment covering 158-169 has biased composition (low complexity); the sequence is SDSSSESKPSGS. Basic and acidic residues-rich tracts occupy residues 172 to 187 and 308 to 317; these read GGDD…DKAL and NSEDKTTEKR. Positions 199 to 451 constitute a Lon N-terminal domain; it reads VMAIPIAKRP…KGLVVLKKEL (253 aa). 604–611 is a binding site for ATP; the sequence is GPPGVGKT. Residues 825-839 are compositionally biased toward basic and acidic residues; it reads AEGKAAQEESEKETG. A disordered region spans residues 825–857; it reads AEGKAAQEESEKETGPIESTSEQEKATTENPRV. The Lon proteolytic domain maps to 891–1077; it reads TFPPGVTMGL…SEVFDILFAD (187 aa). Active-site residues include Ser-983 and Lys-1026.

Belongs to the peptidase S16 family. Homohexamer or homoheptamer. Organized in a ring with a central cavity.

Its subcellular location is the mitochondrion matrix. It carries out the reaction Hydrolysis of proteins in presence of ATP.. Functionally, ATP-dependent serine protease that mediates the selective degradation of misfolded, unassembled or oxidatively damaged polypeptides as well as certain short-lived regulatory proteins in the mitochondrial matrix. May also have a chaperone function in the assembly of inner membrane protein complexes. Participates in the regulation of mitochondrial gene expression and in the maintenance of the integrity of the mitochondrial genome. Binds to mitochondrial DNA in a site-specific manner. The chain is Lon protease homolog, mitochondrial (pim1) from Emericella nidulans (strain FGSC A4 / ATCC 38163 / CBS 112.46 / NRRL 194 / M139) (Aspergillus nidulans).